We begin with the raw amino-acid sequence, 464 residues long: MVQSLAWAGVMTLLMVQWGSAAKLVCYLTNWSQYRTEAVRFFPRDVDPNLCTHVIFAFAGMDNHQLSTVEHNDELLYQELNSLKTKNPKLKTLLAVGGWTFGTQKFTDMVATASNRQTFVKSALSFLRTQGFDGLDLDWEFPGGRGSPTVDKERFTALIQDLAKAFQEEAQSSGKERLLLTAAVPSDRGLVDAGYEVDKIAQSLDFINLMAYDFHSSLEKTTGHNSPLYKRQGESGAAAEQNVDAAVTLWLQKGTPASKLILGMPTYGRSFTLASSSDNGVGAPATGPGAPGPYTKDKGVLAYYEACSWKERHRIEDQKVPYAFQDNQWVSFDDVESFKAKAAYLKQKGLGGAMVWVLDLDDFKGSFCNQGPYPLIRTLRQELNLPSETPRSPEQIIPEPRPSSMPEQGPSPGLDNFCQGKADGVYPNPGDESTYYNCGGGRLFQQSCPPGLVFRASCKCCTWS.

The first 21 residues, 1–21 (MVQSLAWAGVMTLLMVQWGSA), serve as a signal peptide directing secretion. The GH18 domain maps to 22–386 (AKLVCYLTNW…RTLRQELNLP (365 aa)). Residues Cys-26 and Cys-51 are joined by a disulfide bond. Residues 70 to 71 (EH) and 97 to 100 (GGWT) each bind chitin. Residue Glu-140 is the Proton donor of the active site. 210–213 (MAYD) is a chitin binding site. Cys-307 and Cys-368 are oxidised to a cystine. A disordered region spans residues 385–416 (LPSETPRSPEQIIPEPRPSSMPEQGPSPGLDN). The region spanning 415 to 464 (DNFCQGKADGVYPNPGDESTYYNCGGGRLFQQSCPPGLVFRASCKCCTWS) is the Chitin-binding type-2 domain. Cys-448 and Cys-461 form a disulfide bridge.

It belongs to the glycosyl hydrolase 18 family. Chitinase class II subfamily. Monomer. As to expression, highly expressed in tongue, stomach, kidney, brain, skin, testis, and bone marrow. Low level of expression was found in lung, heart, spleen, small intestine, and liver. Not detectable in pancreas, salivary gland, large intestine, uterus, or peripheral blood mononuclear cells (PBMC).

It is found in the secreted. Its subcellular location is the lysosome. The catalysed reaction is Random endo-hydrolysis of N-acetyl-beta-D-glucosaminide (1-&gt;4)-beta-linkages in chitin and chitodextrins.. Its function is as follows. Degrades chitin, chitotriose and chitobiose. May participate in the defense against nematodes and other pathogens. This Mus musculus (Mouse) protein is Chitotriosidase-1 (Chit1).